The following is a 729-amino-acid chain: U-box domain-containing protein 17 (729 aa).

A U-box domain is found at 304–378 (TVPKDFVCPI…VQWCTASGIS (75 aa)). ARM repeat units lie at residues 438 to 477 (KENR…NLSI), 479 to 520 (EKNK…SLSA), 523 to 562 (EYKK…NLST), and 564 to 601 (PDNC…LLVR).

It catalyses the reaction S-ubiquitinyl-[E2 ubiquitin-conjugating enzyme]-L-cysteine + [acceptor protein]-L-lysine = [E2 ubiquitin-conjugating enzyme]-L-cysteine + N(6)-ubiquitinyl-[acceptor protein]-L-lysine.. It functions in the pathway protein modification; protein ubiquitination. In terms of biological role, functions as an E3 ubiquitin ligase. This is U-box domain-containing protein 17 (PUB17) from Arabidopsis thaliana (Mouse-ear cress).